A 282-amino-acid polypeptide reads, in one-letter code: UDP-N-acetylenolpyruvoylglucosamine reductase (282 aa).

An FAD-binding PCMH-type domain is found at 15–179 (IKSFAKYVYF…LSAEFEFEYK (165 aa)). Residue Arg-157 is part of the active site. Ser-207 serves as the catalytic Proton donor. The active site involves Glu-278.

It belongs to the MurB family. Requires FAD as cofactor.

The protein resides in the cytoplasm. It catalyses the reaction UDP-N-acetyl-alpha-D-muramate + NADP(+) = UDP-N-acetyl-3-O-(1-carboxyvinyl)-alpha-D-glucosamine + NADPH + H(+). The protein operates within cell wall biogenesis; peptidoglycan biosynthesis. Its function is as follows. Cell wall formation. This Francisella tularensis subsp. tularensis (strain SCHU S4 / Schu 4) protein is UDP-N-acetylenolpyruvoylglucosamine reductase.